The following is a 192-amino-acid chain: Calcium-binding protein K (192 aa).

2 EF-hand domains span residues 60–95 and 96–131; these read WDEA…MAKA and PTLD…VVCC. 9 residues coordinate Ca(2+): Asp73, Asp75, Asn77, Glu84, Asp109, Asp111, Ser113, Tyr115, and Glu120.

Belongs to the recoverin family.

The protein is Calcium-binding protein K (cbpK) of Dictyostelium discoideum (Social amoeba).